Consider the following 115-residue polypeptide: EVKLEESGGGLVQPGGSMKLSCVASGFTFSNYWMNWVRQSPEKGLEWVAEIRLKSNNYATHYAESVKGRFTISRDDSKSSVYLQMNNLRAEDTGIYYCTTGFAYWGQGTLVTVSA.

An Ig-like domain is found at 1 to 114 (EVKLEESGGG…WGQGTLVTVS (114 aa)). A disulfide bridge links C22 with C98.

The protein is Ig heavy chain V-III region J606 of Mus musculus (Mouse).